The chain runs to 460 residues: Putative movement protein (460 aa).

2 disordered regions span residues Ser267 to Glu314 and Arg349 to Leu460. The span at Arg368 to Gln379 shows a compositional bias: basic residues.

This sequence belongs to the tobamoviruses movement protein family.

In terms of biological role, suppressor of viral-induced RNA silencing. The chain is Putative movement protein from Crataegus (hawthorn).